The sequence spans 95 residues: MAITEDEARKVAHLARIAVKDADLPALAQELNGILHFMEQLNEVDVEGVQPMTGVEPMRLKRRQDIVTDGEMQDLILKNAPDAREGFFAVPKVVE.

This sequence belongs to the GatC family. As to quaternary structure, heterotrimer of A, B and C subunits.

It catalyses the reaction L-glutamyl-tRNA(Gln) + L-glutamine + ATP + H2O = L-glutaminyl-tRNA(Gln) + L-glutamate + ADP + phosphate + H(+). It carries out the reaction L-aspartyl-tRNA(Asn) + L-glutamine + ATP + H2O = L-asparaginyl-tRNA(Asn) + L-glutamate + ADP + phosphate + 2 H(+). Allows the formation of correctly charged Asn-tRNA(Asn) or Gln-tRNA(Gln) through the transamidation of misacylated Asp-tRNA(Asn) or Glu-tRNA(Gln) in organisms which lack either or both of asparaginyl-tRNA or glutaminyl-tRNA synthetases. The reaction takes place in the presence of glutamine and ATP through an activated phospho-Asp-tRNA(Asn) or phospho-Glu-tRNA(Gln). The protein is Aspartyl/glutamyl-tRNA(Asn/Gln) amidotransferase subunit C of Paracoccus denitrificans (strain Pd 1222).